The sequence spans 182 residues: ATP-dependent protease subunit HslV (182 aa).

Thr7 is an active-site residue. 3 residues coordinate Na(+): Gly162, Cys165, and Thr168.

Belongs to the peptidase T1B family. HslV subfamily. In terms of assembly, a double ring-shaped homohexamer of HslV is capped on each side by a ring-shaped HslU homohexamer. The assembly of the HslU/HslV complex is dependent on binding of ATP.

The protein resides in the cytoplasm. It carries out the reaction ATP-dependent cleavage of peptide bonds with broad specificity.. Its activity is regulated as follows. Allosterically activated by HslU binding. In terms of biological role, protease subunit of a proteasome-like degradation complex believed to be a general protein degrading machinery. The protein is ATP-dependent protease subunit HslV of Legionella pneumophila subsp. pneumophila (strain Philadelphia 1 / ATCC 33152 / DSM 7513).